We begin with the raw amino-acid sequence, 228 residues long: Lipoprotein-releasing system ATP-binding protein LolD (228 aa).

The ABC transporter domain occupies 6–225; the sequence is LEAKDVYKHF…ILHMQDGLWV (220 aa). 42-49 provides a ligand contact to ATP; it reads GASGSGKS.

The protein belongs to the ABC transporter superfamily. Lipoprotein translocase (TC 3.A.1.125) family. In terms of assembly, the complex is composed of two ATP-binding proteins (LolD) and two transmembrane proteins (LolC and LolE).

The protein resides in the cell inner membrane. Its function is as follows. Part of the ABC transporter complex LolCDE involved in the translocation of mature outer membrane-directed lipoproteins, from the inner membrane to the periplasmic chaperone, LolA. Responsible for the formation of the LolA-lipoprotein complex in an ATP-dependent manner. The sequence is that of Lipoprotein-releasing system ATP-binding protein LolD from Acinetobacter baylyi (strain ATCC 33305 / BD413 / ADP1).